Consider the following 872-residue polypeptide: Alanine--tRNA ligase (872 aa).

His-571, His-575, Cys-674, and His-678 together coordinate Zn(2+).

Belongs to the class-II aminoacyl-tRNA synthetase family. The cofactor is Zn(2+).

It localises to the cytoplasm. It carries out the reaction tRNA(Ala) + L-alanine + ATP = L-alanyl-tRNA(Ala) + AMP + diphosphate. Functionally, catalyzes the attachment of alanine to tRNA(Ala) in a two-step reaction: alanine is first activated by ATP to form Ala-AMP and then transferred to the acceptor end of tRNA(Ala). Also edits incorrectly charged Ser-tRNA(Ala) and Gly-tRNA(Ala) via its editing domain. This chain is Alanine--tRNA ligase, found in Symbiobacterium thermophilum (strain DSM 24528 / JCM 14929 / IAM 14863 / T).